The chain runs to 49 residues: Large ribosomal subunit protein bL33A (49 aa).

The protein belongs to the bacterial ribosomal protein bL33 family.

The polypeptide is Large ribosomal subunit protein bL33A (Staphylococcus saprophyticus subsp. saprophyticus (strain ATCC 15305 / DSM 20229 / NCIMB 8711 / NCTC 7292 / S-41)).